Reading from the N-terminus, the 625-residue chain is Probable potassium transport system protein Kup (625 aa).

12 helical membrane-spanning segments follow: residues 13 to 33 (TALA…LYAL), 53 to 73 (ILSI…VAIV), 103 to 123 (IYMI…GIIT), 141 to 161 (VFDP…FLVQ), 172 to 192 (FGPI…HSVI), 206 to 226 (AIQF…AVVL), 250 to 270 (WFFV…ALLL), 282 to 302 (LLVP…ATVI), 340 to 360 (IYVP…ILIF), 369 to 389 (AYGL…AVFI), 400 to 420 (VLIL…ATSL), and 422 to 442 (ILSG…ILMT).

This sequence belongs to the HAK/KUP transporter (TC 2.A.72) family.

The protein localises to the cell inner membrane. It carries out the reaction K(+)(in) + H(+)(in) = K(+)(out) + H(+)(out). Functionally, transport of potassium into the cell. Likely operates as a K(+):H(+) symporter. This Acinetobacter baumannii (strain SDF) protein is Probable potassium transport system protein Kup.